Reading from the N-terminus, the 307-residue chain is 2,4-diacetylphloroglucinol hydrolase (307 aa).

Residues H142, E173, H283, and E287 each coordinate Zn(2+).

The protein belongs to the DAPG/phloretin hydrolase family. Zn(2+) is required as a cofactor.

The catalysed reaction is 2,4-diacetylphloroglucinol + H2O = 2-acetylphloroglucinol + acetate. With respect to regulation, activity is strongly reduced by pyoluteorin, an antifungal compound produced by the bacterium. Its function is as follows. Hydrolase that specifically degrades the potent antimicrobial compound 2,4-diacetylphloroglucinol (DAPG) to equimolar amounts of mildly toxic monoacetylphloroglucinol (MAPG) and acetate. Does not degrade other compounds with structures similar to DAPG, such as MAPG and triacetylphloroglucinol, suggesting strict substrate specificity. Degradation of DAPG to MAPG may provide an additional means of fine-tuning levels of this antibiotic or may help avoid accumulation of a metabolite that at high levels may become toxic to the producing bacterium. The polypeptide is 2,4-diacetylphloroglucinol hydrolase (Pseudomonas protegens (strain DSM 19095 / LMG 27888 / CFBP 6595 / CHA0)).